The primary structure comprises 199 residues: Inactive glutathione S-transferase D3 (199 aa).

The region spanning 1–64 (MVGKALGLEF…YLVEKYGKDD (64 aa)) is the GST N-terminal domain. Glutathione-binding positions include 34 to 36 (HSI) and 48 to 50 (ESR). Residues 70 to 199 (DIQKQAVINQ…RIEEKQNAAK (130 aa)) enclose the GST C-terminal domain.

Belongs to the GST superfamily. Delta family. In terms of assembly, homodimer.

Its function is as follows. Has no glutathione S-transferase activity. This Drosophila melanogaster (Fruit fly) protein is Inactive glutathione S-transferase D3.